Consider the following 66-residue polypeptide: Large ribosomal subunit protein uL29 (66 aa).

The protein belongs to the universal ribosomal protein uL29 family.

The chain is Large ribosomal subunit protein uL29 from Nitrosococcus oceani (strain ATCC 19707 / BCRC 17464 / JCM 30415 / NCIMB 11848 / C-107).